The sequence spans 1017 residues: Voltage-gated delayed rectifier potassium channel KCNH4 (1017 aa).

The Cytoplasmic segment spans residues 1 to 232 (MPVMKGLLAP…YSIPKAVWDG (232 aa)). The PAS domain maps to 14–90 (FLDTIATRFD…QRLQKALEGH (77 aa)). The PAC domain occupies 93–145 (HRAEICFYRKDGSAFWCLLDMMPIKNELGEVVLFLFSFKDISQSGGPGLGSPG). The disordered stretch occupies residues 139-170 (PGLGSPGIHGDNNNHENSLGRRGASSRLRSTR). A helical transmembrane segment spans residues 233–253 (LILLATFYVAVTVPYNVCFAG). At 254–262 (DDDTPITSR) the chain is on the extracellular side. A helical transmembrane segment spans residues 263-283 (HTLVSDIAVEMLFILDIILNF). The Cytoplasmic segment spans residues 284–305 (RTTYVSQSGQVVSAPRSIGLHY). The chain crosses the membrane as a helical span at residues 306 to 326 (LATWFFVDLIAALPFDLLYVF). The Extracellular portion of the chain corresponds to 327-334 (NITVTSLV). A helical; Voltage-sensor membrane pass occupies residues 335-355 (HLLKTVRLLRLLRLLQKLERY). Topologically, residues 356 to 364 (SQCSAVVLT) are cytoplasmic. The chain crosses the membrane as a helical span at residues 365 to 385 (LLMSVFALLAHWMACVWYVIG). The Extracellular portion of the chain corresponds to 386–427 (RREMEANDPLLWDIGWLHELGKRLEEPYVNGSAGGPSRRSAY). A glycan (N-linked (GlcNAc...) asparagine) is linked at asparagine 415. Positions 428-448 (IAALYFTLSSLTSVGFGNVCA) form an intramembrane region, pore-forming. The Selectivity filter motif lies at 440-445 (SVGFGN). Topologically, residues 449–454 (NTDAEK) are extracellular. A helical membrane pass occupies residues 455–475 (IFSICTMLIGALMHAVVFGNV). Over 476 to 1017 (TAIIQRMYSR…SFQSGSDTFH (542 aa)) the chain is Cytoplasmic. Residues 557–621 (LFGAASRGCL…AILGKGDLIG (65 aa)) form a cNMP-binding domain region. Disordered regions lie at residues 690–749 (GSEN…PNLS) and 771–870 (LVSS…ELAT). The segment covering 703–726 (PRLSQARSDTLGSSSDKTLPSITE) has biased composition (polar residues). Composition is skewed to low complexity over residues 771–786 (LVSS…PALA) and 806–820 (PPQL…FGPP). Residues 873 to 907 (AEEVKEKVCRLNQEISRLNQEVSQLSRELRQVMGL) adopt a coiled-coil conformation. The interval 972–1017 (SELRSSMVPPFPSEPDPLGPSPVPEASPLTPSLLKHSFQSGSDTFH) is disordered. Pro residues predominate over residues 980–996 (PPFPSEPDPLGPSPVPE). The span at 1008-1017 (SFQSGSDTFH) shows a compositional bias: polar residues.

Belongs to the potassium channel family. H (Eag) (TC 1.A.1.20) subfamily. Kv12.3/KCNH4 sub-subfamily. In terms of assembly, the potassium channel is probably composed of a homo- or heterotetrameric complex of pore-forming alpha subunits that can associate with modulating beta subunits. As to expression, highly expressed in adult testis, and in adult and embryonic brain. In adult brain found in piriform cortex, olfactory tubercle, cerebral cortex, hippocampus pyramidial cells and dentate gyrus and basal ganglia of caudate/putamen and accumbens nucleus. Detected at intermediate levels in lung, spinal cord, and pituitary.

It localises to the membrane. It carries out the reaction K(+)(in) = K(+)(out). Pore-forming (alpha) subunit of a voltage-gated delayed rectifier. Activates at more negative voltages, exhibits fast prepulse-independent activation kinetics and deactivates much more slowly, but shows no inactivation. The protein is Voltage-gated delayed rectifier potassium channel KCNH4 of Rattus norvegicus (Rat).